We begin with the raw amino-acid sequence, 629 residues long: Coiled-coil domain-containing protein 120 (629 aa).

Residues 31-70 (RLRGLLDRQRALQEALSVKLQELRKVCLQEAELTGQLPPE) are involved in CYTH2-binding. Residues 109-173 (ELALEALERE…LRDFRARLGL (65 aa)) are a coiled coil. 2 stretches are compositionally biased toward low complexity: residues 209–219 (HSESSSLSESG) and 279–294 (ASPTSPTRSLPRSASS). The segment at 209–356 (HSESSSLSES…LFAARTRRSN (148 aa)) is disordered. Positions 323–332 (RQWSGSQDSQ) are enriched in polar residues. S355 and S357 each carry phosphoserine. Disordered regions lie at residues 399 to 432 (QPVPSFSSRTTGPPDPPRAARPSSAAPASRGAPR) and 602 to 629 (PSQAPLPHSRSFTAPPVSGRYGGAFTDG). Over residues 418–432 (ARPSSAAPASRGAPR) the composition is skewed to low complexity. The residue at position 432 (R432) is an Omega-N-methylarginine.

In terms of assembly, interacts with NIN and CEP170; leading to recruit them to centrosomes. Interacts with CYTH2; this interaction is direct and stabilizes CCDC120, possibly by preventing ubiquitination. Post-translationally, ubiquitinated; interaction with CYTH2 may prevent ubiquitination.

It localises to the cytoplasm. The protein resides in the cytoskeleton. Its subcellular location is the microtubule organizing center. It is found in the centrosome. The protein localises to the centriole. It localises to the cell projection. The protein resides in the neuron projection. Its subcellular location is the growth cone. It is found in the endosome. Functionally, centriolar protein required for centriole subdistal appendage assembly and microtubule anchoring in interphase cells. Together with CCDC68, cooperate with subdistal appendage components ODF2, NIN and CEP170 for hierarchical subdistal appendage assembly. Recruits NIN and CEP170 to centrosomes. Also required for neurite growth. Localizes CYTH2 to vesicles to allow its transport along neurites, and subsequent ARF6 activation and neurite growth. This is Coiled-coil domain-containing protein 120 from Mus musculus (Mouse).